The primary structure comprises 375 residues: Erythronate-4-phosphate dehydrogenase (375 aa).

S45 and T66 together coordinate substrate. NAD(+) contacts are provided by D146 and T175. The active site involves R208. D232 contributes to the NAD(+) binding site. E237 is a catalytic residue. The active-site Proton donor is H254. G257 contributes to the NAD(+) binding site. Y258 serves as a coordination point for substrate.

Belongs to the D-isomer specific 2-hydroxyacid dehydrogenase family. PdxB subfamily. In terms of assembly, homodimer.

The protein resides in the cytoplasm. It carries out the reaction 4-phospho-D-erythronate + NAD(+) = (R)-3-hydroxy-2-oxo-4-phosphooxybutanoate + NADH + H(+). The protein operates within cofactor biosynthesis; pyridoxine 5'-phosphate biosynthesis; pyridoxine 5'-phosphate from D-erythrose 4-phosphate: step 2/5. Its function is as follows. Catalyzes the oxidation of erythronate-4-phosphate to 3-hydroxy-2-oxo-4-phosphonooxybutanoate. In Yersinia pseudotuberculosis serotype O:1b (strain IP 31758), this protein is Erythronate-4-phosphate dehydrogenase.